The following is a 169-amino-acid chain: Neurotensin/neuromedin N (169 aa).

Positions 1 to 22 are cleaved as a signal peptide; the sequence is MRGMNLQLVCLTLLAFSSWSLC.

The protein belongs to the neurotensin family. Interacts with NTSR1. Interacts with SORT1. Interacts with SORL1. Neurotensin is cleaved and degraded by Angiotensin-converting enzyme (ACE) and neprilysin (MME).

The protein resides in the secreted. Its subcellular location is the cytoplasmic vesicle. The protein localises to the secretory vesicle. Functionally, neurotensin may play an endocrine or paracrine role in the regulation of fat metabolism. It causes contraction of smooth muscle. The protein is Neurotensin/neuromedin N (Nts) of Mus musculus (Mouse).